The following is a 150-amino-acid chain: Cytochrome c oxidase subunit 5A, mitochondrial (150 aa).

Residues methionine 1 to tyrosine 41 constitute a mitochondrion transit peptide. The SIFI-degron signature appears at leucine 2–alanine 17. N6-acetyllysine occurs at positions 87 and 113. Position 141 is a phosphothreonine (threonine 141).

It belongs to the cytochrome c oxidase subunit 5A family. In terms of assembly, component of the cytochrome c oxidase (complex IV, CIV), a multisubunit enzyme composed of 14 subunits. The complex is composed of a catalytic core of 3 subunits MT-CO1, MT-CO2 and MT-CO3, encoded in the mitochondrial DNA, and 11 supernumerary subunits COX4I, COX5A, COX5B, COX6A, COX6B, COX6C, COX7A, COX7B, COX7C, COX8 and NDUFA4, which are encoded in the nuclear genome. The complex exists as a monomer or a dimer and forms supercomplexes (SCs) in the inner mitochondrial membrane with NADH-ubiquinone oxidoreductase (complex I, CI) and ubiquinol-cytochrome c oxidoreductase (cytochrome b-c1 complex, complex III, CIII), resulting in different assemblies (supercomplex SCI(1)III(2)IV(1) and megacomplex MCI(2)III(2)IV(2)). Interacts with AFG1L. Interacts with RAB5IF. In terms of processing, in response to mitochondrial stress, the precursor protein is ubiquitinated by the SIFI complex in the cytoplasm before mitochondrial import, leading to its degradation. Within the SIFI complex, UBR4 initiates ubiquitin chain that are further elongated or branched by KCMF1.

It localises to the mitochondrion inner membrane. The protein operates within energy metabolism; oxidative phosphorylation. Functionally, component of the cytochrome c oxidase, the last enzyme in the mitochondrial electron transport chain which drives oxidative phosphorylation. The respiratory chain contains 3 multisubunit complexes succinate dehydrogenase (complex II, CII), ubiquinol-cytochrome c oxidoreductase (cytochrome b-c1 complex, complex III, CIII) and cytochrome c oxidase (complex IV, CIV), that cooperate to transfer electrons derived from NADH and succinate to molecular oxygen, creating an electrochemical gradient over the inner membrane that drives transmembrane transport and the ATP synthase. Cytochrome c oxidase is the component of the respiratory chain that catalyzes the reduction of oxygen to water. Electrons originating from reduced cytochrome c in the intermembrane space (IMS) are transferred via the dinuclear copper A center (CU(A)) of subunit 2 and heme A of subunit 1 to the active site in subunit 1, a binuclear center (BNC) formed by heme A3 and copper B (CU(B)). The BNC reduces molecular oxygen to 2 water molecules using 4 electrons from cytochrome c in the IMS and 4 protons from the mitochondrial matrix. The protein is Cytochrome c oxidase subunit 5A, mitochondrial (COX5A) of Pan troglodytes (Chimpanzee).